A 124-amino-acid chain; its full sequence is Large ribosomal subunit protein bL12 (124 aa).

It belongs to the bacterial ribosomal protein bL12 family. Homodimer. Part of the ribosomal stalk of the 50S ribosomal subunit. Forms a multimeric L10(L12)X complex, where L10 forms an elongated spine to which 2 to 4 L12 dimers bind in a sequential fashion. Binds GTP-bound translation factors.

Its function is as follows. Forms part of the ribosomal stalk which helps the ribosome interact with GTP-bound translation factors. Is thus essential for accurate translation. The sequence is that of Large ribosomal subunit protein bL12 from Azobacteroides pseudotrichonymphae genomovar. CFP2.